Here is a 72-residue protein sequence, read N- to C-terminus: Translation initiation factor IF-1 (72 aa).

The S1-like domain occupies 1-72 (MAKEDNIEMQ…SKGRIVFRSR (72 aa)).

It belongs to the IF-1 family. In terms of assembly, component of the 30S ribosomal translation pre-initiation complex which assembles on the 30S ribosome in the order IF-2 and IF-3, IF-1 and N-formylmethionyl-tRNA(fMet); mRNA recruitment can occur at any time during PIC assembly.

Its subcellular location is the cytoplasm. One of the essential components for the initiation of protein synthesis. Stabilizes the binding of IF-2 and IF-3 on the 30S subunit to which N-formylmethionyl-tRNA(fMet) subsequently binds. Helps modulate mRNA selection, yielding the 30S pre-initiation complex (PIC). Upon addition of the 50S ribosomal subunit IF-1, IF-2 and IF-3 are released leaving the mature 70S translation initiation complex. In Klebsiella pneumoniae subsp. pneumoniae (strain ATCC 700721 / MGH 78578), this protein is Translation initiation factor IF-1.